Here is a 1034-residue protein sequence, read N- to C-terminus: Ubiquitin-like-specific protease 2 (1034 aa).

6 disordered regions span residues 1-42 (MSAR…FRKD), 71-110 (IELS…HSSL), 388-419 (SHAV…DDAT), 731-800 (IDQS…PIRH), 841-960 (GVSS…DSLG), and 983-1034 (SSPT…DEDP). The span at 19 to 33 (SSRASSPRSSASLPP) shows a compositional bias: low complexity. Residues 74–85 (SDNDVDNNDEGE) are compositionally biased toward acidic residues. Over residues 743-756 (TSEPPCSRSSSIST) the composition is skewed to low complexity. Serine 788 is modified (phosphoserine). Polar residues-rich tracts occupy residues 845–856 (PIKNDQALSSTH), 876–904 (QLSS…VISD), and 912–923 (GVNSESKNTSGI). Serine 903 bears the Phosphoserine mark. Residues serine 983 and serine 984 each carry the phosphoserine modification. Over residues 992–1017 (TSATSKGSNAQLLSNYGDENNQSQDS) the composition is skewed to polar residues.

Belongs to the peptidase C48 family.

In terms of biological role, insertion mutation in SMT4 confers temperature and benomyl sensitivity; high copy suppressor of a temperature sensitive mutation in MIF2. This is Ubiquitin-like-specific protease 2 (ULP2) from Saccharomyces cerevisiae (strain ATCC 204508 / S288c) (Baker's yeast).